The primary structure comprises 132 residues: Small ribosomal subunit protein uS8 (132 aa).

Belongs to the universal ribosomal protein uS8 family. As to quaternary structure, part of the 30S ribosomal subunit. Contacts proteins S5 and S12.

Its function is as follows. One of the primary rRNA binding proteins, it binds directly to 16S rRNA central domain where it helps coordinate assembly of the platform of the 30S subunit. This chain is Small ribosomal subunit protein uS8, found in Staphylococcus saprophyticus subsp. saprophyticus (strain ATCC 15305 / DSM 20229 / NCIMB 8711 / NCTC 7292 / S-41).